A 162-amino-acid polypeptide reads, in one-letter code: Transcription elongation factor GreA (162 aa).

A coiled-coil region spans residues 45–74; that stretch reads ENAEYEAAREKQAFIEGRIKELEDMTARAE.

Belongs to the GreA/GreB family.

Necessary for efficient RNA polymerase transcription elongation past template-encoded arresting sites. The arresting sites in DNA have the property of trapping a certain fraction of elongating RNA polymerases that pass through, resulting in locked ternary complexes. Cleavage of the nascent transcript by cleavage factors such as GreA or GreB allows the resumption of elongation from the new 3'terminus. GreA releases sequences of 2 to 3 nucleotides. The protein is Transcription elongation factor GreA of Rickettsia prowazekii (strain Madrid E).